Here is a 702-residue protein sequence, read N- to C-terminus: Palmitoyltransferase AKR1 (702 aa).

Residues 1 to 40 (MSTDAELQTISGLSVASKSAPSTQTEGVTASGKVESTTNA) are compositionally biased toward polar residues. The interval 1–51 (MSTDAELQTISGLSVASKSAPSTQTEGVTASGKVESTTNAEEATSDVEEEE) is disordered. Residues 1–299 (MSTDAELQTI…TTNLLCFFTP (299 aa)) are Cytoplasmic-facing. 6 ANK repeats span residues 49–80 (EEENPLVVAARDGNTAEVKRLCESGSYSVLDT), 83–112 (DGVTALHWAAVNNRISTCQYLVEQGAVVDA), 117–147 (LNGTPLHWACRRGLVYIVHYLIQNGADPLRS), 150–179 (QGYNALHLATHSSNVMLLVYLLHQGLPVDC), 183–212 (NGRTALHWAAYQGDALSVDVLLRWGSDVKI), and 216–245 (QGFLPLHWGIVNGSRNSLARLIEEGSDMYA). 2 consecutive transmembrane segments (helical) span residues 300-320 (FILILLGLVLCTFCGPIFGII) and 321-341 (LTVATLFGSIKLLKTLVLPSL). Topologically, residues 342–354 (YNGHAALLKSPFQ) are cytoplasmic. The helical transmembrane segment at 355–375 (AGIFTGSAFWVTVKYLTSVLP) threads the bilayer. The Lumenal segment spans residues 376–379 (ATFA). A helical transmembrane segment spans residues 380-400 (SHPILNFFFASIFGLAMYCFF). Topologically, residues 401 to 479 (RCMSMDPGYI…WNAIGVRNHR (79 aa)) are cytoplasmic. Positions 436 to 486 (HFCFVTYVRKPLRSKFCRQSKRVVARFDHFCPWVWNAIGVRNHRMFVLYVL) constitute a DHHC domain. The S-palmitoyl cysteine intermediate role is filled by C466. A helical transmembrane segment spans residues 480–500 (MFVLYVLFLQIGIPLWLALNS). The Lumenal portion of the chain corresponds to 501-518 (AYFGELLEIKRWDPLEFY). Residues 519 to 539 (LVIWISLQLIWITFLSFVQIF) form a helical membrane-spanning segment. The Cytoplasmic segment spans residues 540–702 (QICRSLTTSE…GEALLAESQV (163 aa)). Residues 679–702 (PNQQQTNNRSTREDGEALLAESQV) are disordered.

Belongs to the DHHC palmitoyltransferase family. AKR/ZDHHC17 subfamily.

It is found in the early endosome membrane. Its subcellular location is the golgi apparatus membrane. It catalyses the reaction L-cysteinyl-[protein] + hexadecanoyl-CoA = S-hexadecanoyl-L-cysteinyl-[protein] + CoA. Functionally, palmitoyltransferase specific for casein kinase 1. The protein is Palmitoyltransferase AKR1 (AKR1) of Yarrowia lipolytica (strain CLIB 122 / E 150) (Yeast).